Reading from the N-terminus, the 512-residue chain is Monocarboxylate transporter 14 (512 aa).

The Cytoplasmic segment spans residues 1-29 (MYTSHEDIGYDLEDDRKAKNKKTLKPHPD). 12 helical membrane passes run 30 to 50 (IDGG…ILIM), 76 to 96 (WVSS…GLFI), 105 to 125 (AIIG…AANV), 129 to 149 (FITF…PAVV), 161 to 181 (LAQG…TVLL), 193 to 211 (AMFI…GALM), 317 to 337 (MFVA…IPFI), 355 to 375 (FPLT…LGAV), 381 to 401 (ISVW…IFLL), 410 to 430 (LAVI…MPVV), 446 to 466 (IIIC…GWIF), and 476 to 496 (FYIC…QPCI). The Cytoplasmic segment spans residues 497 to 512 (QMIDQSRRKCIEGAHV).

The protein belongs to the major facilitator superfamily. Monocarboxylate porter (TC 2.A.1.13) family.

Its subcellular location is the cell membrane. Its function is as follows. Proton-linked monocarboxylate transporter. May catalyze the transport of monocarboxylates across the plasma membrane. In Mus musculus (Mouse), this protein is Monocarboxylate transporter 14 (Slc16a14).